The chain runs to 397 residues: Argininosuccinate synthase (397 aa).

8–16 (AYSGGLDTS) serves as a coordination point for ATP. Positions 86 and 91 each coordinate L-citrulline. Gly-116 is an ATP binding site. L-aspartate contacts are provided by Thr-118, Asn-122, and Asp-123. Asn-122 provides a ligand contact to L-citrulline. L-citrulline is bound by residues Arg-126, Ser-175, Ser-184, Glu-260, and Tyr-272.

This sequence belongs to the argininosuccinate synthase family. Type 1 subfamily. Homotetramer.

It is found in the cytoplasm. The enzyme catalyses L-citrulline + L-aspartate + ATP = 2-(N(omega)-L-arginino)succinate + AMP + diphosphate + H(+). It functions in the pathway amino-acid biosynthesis; L-arginine biosynthesis; L-arginine from L-ornithine and carbamoyl phosphate: step 2/3. In Clostridium botulinum (strain Langeland / NCTC 10281 / Type F), this protein is Argininosuccinate synthase.